The primary structure comprises 426 residues: Enolase (426 aa).

Q163 is a (2R)-2-phosphoglycerate binding site. E205 acts as the Proton donor in catalysis. Residues D242, E283, and D310 each coordinate Mg(2+). (2R)-2-phosphoglycerate is bound by residues K335, R364, S365, and K386. The Proton acceptor role is filled by K335.

Belongs to the enolase family. Mg(2+) is required as a cofactor.

It localises to the cytoplasm. Its subcellular location is the secreted. The protein localises to the cell surface. It catalyses the reaction (2R)-2-phosphoglycerate = phosphoenolpyruvate + H2O. The protein operates within carbohydrate degradation; glycolysis; pyruvate from D-glyceraldehyde 3-phosphate: step 4/5. Functionally, catalyzes the reversible conversion of 2-phosphoglycerate (2-PG) into phosphoenolpyruvate (PEP). It is essential for the degradation of carbohydrates via glycolysis. This Clavibacter sepedonicus (Clavibacter michiganensis subsp. sepedonicus) protein is Enolase.